A 493-amino-acid polypeptide reads, in one-letter code: Glutamate--tRNA ligase (493 aa).

Residues 10-20 (PSPTGDPHVGT) carry the 'HIGH' region motif. The 'KMSKS' region motif lies at 251-255 (KLSKR). Lysine 254 lines the ATP pocket.

It belongs to the class-I aminoacyl-tRNA synthetase family. Glutamate--tRNA ligase type 1 subfamily. As to quaternary structure, monomer.

The protein localises to the cytoplasm. The catalysed reaction is tRNA(Glu) + L-glutamate + ATP = L-glutamyl-tRNA(Glu) + AMP + diphosphate. Its function is as follows. Catalyzes the attachment of glutamate to tRNA(Glu) in a two-step reaction: glutamate is first activated by ATP to form Glu-AMP and then transferred to the acceptor end of tRNA(Glu). The sequence is that of Glutamate--tRNA ligase from Pseudomonas entomophila (strain L48).